The following is a 388-amino-acid chain: Type II secretion system protein F (388 aa).

Residues 1–28 (MTEGDSARQVRQQLREQGLTPLEVNETT) form a disordered region. Residues 1–153 (MTEGDSARQV…HMRTKLLQAM (153 aa)) lie on the Cytoplasmic side of the membrane. The Ca(2+) site is built by Glu-79, Asn-133, and Asp-137. The helical transmembrane segment at 154–174 (IYPIVLTLVAVGVISILLTAV) threads the bilayer. Residues 175 to 205 (VPKVVAQFEHMGQQLPATTRFLIGTSELMQH) lie on the Periplasmic side of the membrane. A helical membrane pass occupies residues 206–226 (YGLWFLLLLFIGGFVWRWWLT). The Cytoplasmic segment spans residues 227-350 (DEKRRRHWHQ…QDREFETQVN (124 aa)). The chain crosses the membrane as a helical span at residues 351 to 371 (IALGVFEPLLVVSMAGVVLFI). At 372 to 388 (VMSILQPILELNNMVNL) the chain is on the periplasmic side.

Belongs to the GSP F family. Type II secretion system is composed of four main components: the outer membrane complex, the inner membrane complex, the cytoplasmic secretion ATPase and the periplasm-spanning pseudopilus. Homodimer. Interacts with ExeE and ExeL components.

The protein resides in the cell inner membrane. Component of the type II secretion system inner membrane complex required for the energy-dependent secretion of extracellular factors such as proteases and toxins from the periplasm. This Aeromonas hydrophila protein is Type II secretion system protein F (exeF).